The following is an 89-amino-acid chain: Small ribosomal subunit protein uS17 (89 aa).

Belongs to the universal ribosomal protein uS17 family. As to quaternary structure, part of the 30S ribosomal subunit.

Its function is as follows. One of the primary rRNA binding proteins, it binds specifically to the 5'-end of 16S ribosomal RNA. The polypeptide is Small ribosomal subunit protein uS17 (Stenotrophomonas maltophilia (strain K279a)).